We begin with the raw amino-acid sequence, 174 residues long: Co-chaperone protein HscB (174 aa).

The J domain occupies 2-74 (NYFTLFDLPR…LNRAIYFLCL (73 aa)).

This sequence belongs to the HscB family. As to quaternary structure, interacts with HscA and stimulates its ATPase activity. Interacts with IscU.

In terms of biological role, co-chaperone involved in the maturation of iron-sulfur cluster-containing proteins. Seems to help targeting proteins to be folded toward HscA. In Buchnera aphidicola subsp. Acyrthosiphon pisum (strain Tuc7), this protein is Co-chaperone protein HscB.